Reading from the N-terminus, the 394-residue chain is Elongation factor Tu (394 aa).

One can recognise a tr-type G domain in the interval 10–205 (KPHMNVGTIG…SMDNYFDLPE (196 aa)). The segment at 19–26 (GHVDHGKT) is G1. Position 19-26 (19-26 (GHVDHGKT)) interacts with GTP. T26 is a Mg(2+) binding site. The G2 stretch occupies residues 61–65 (GITIN). Residues 82-85 (DCPG) form a G3 region. GTP contacts are provided by residues 82-86 (DCPGH) and 137-140 (NKLD). The interval 137-140 (NKLD) is G4. The segment at 173–175 (SAF) is G5.

The protein belongs to the TRAFAC class translation factor GTPase superfamily. Classic translation factor GTPase family. EF-Tu/EF-1A subfamily. As to quaternary structure, monomer.

The protein localises to the cytoplasm. The enzyme catalyses GTP + H2O = GDP + phosphate + H(+). Its function is as follows. GTP hydrolase that promotes the GTP-dependent binding of aminoacyl-tRNA to the A-site of ribosomes during protein biosynthesis. The sequence is that of Elongation factor Tu from Borreliella burgdorferi (strain ATCC 35210 / DSM 4680 / CIP 102532 / B31) (Borrelia burgdorferi).